The primary structure comprises 286 residues: Putative movement protein 3 (286 aa).

Belongs to the nucleorhabdovirus type-1 movement protein family.

Functionally, transports viral genome to neighboring plant cells directly through plasmosdesmata, without any budding. The movement protein allows efficient cell to cell propagation, by bypassing the host cell wall barrier. The polypeptide is Putative movement protein 3 (3) (Rottboellia (Sorghum)).